The chain runs to 132 residues: UPF0299 membrane protein YohJ (132 aa).

The next 4 helical transmembrane spans lie at 7 to 27, 31 to 51, 63 to 83, and 93 to 113; these read IIWQ…AGIF, LLPI…VLLA, GCYV…VGVM, and FGPV…VVSW.

Belongs to the UPF0299 family.

The protein localises to the cell inner membrane. This chain is UPF0299 membrane protein YohJ, found in Salmonella agona (strain SL483).